The primary structure comprises 155 residues: Putative pre-16S rRNA nuclease (155 aa).

It belongs to the YqgF nuclease family.

Its subcellular location is the cytoplasm. Could be a nuclease involved in processing of the 5'-end of pre-16S rRNA. The chain is Putative pre-16S rRNA nuclease from Xanthomonas axonopodis pv. citri (strain 306).